The following is a 126-amino-acid chain: Histone H2B 7 (126 aa).

Positions 1-12 are enriched in low complexity; it reads MPEPAKSAPAPK. Residues 1–35 form a disordered region; it reads MPEPAKSAPAPKKGSKKAVTKTQKKGDKKRKRARK. N6-acetyllysine occurs at positions 6 and 13. Positions 13-34 are enriched in basic residues; it reads KGSKKAVTKTQKKGDKKRKRAR. A Phosphoserine modification is found at S15. N6-acetyllysine is present on residues K16 and K21. The O-linked (GlcNAc) serine glycan is linked to S113. K121 participates in a covalent cross-link: Glycyl lysine isopeptide (Lys-Gly) (interchain with G-Cter in ubiquitin).

The protein belongs to the histone H2B family. As to quaternary structure, the nucleosome is a histone octamer containing two molecules each of H2A, H2B, H3 and H4 assembled in one H3-H4 heterotetramer and two H2A-H2B heterodimers. The octamer wraps approximately 147 bp of DNA. Post-translationally, monoubiquitination of Lys-121 by the BRE1 gives a specific tag for epigenetic transcriptional activation and is also prerequisite for histone H3 'Lys-4' and 'Lys-79' methylation. In terms of processing, phosphorylated on Ser-15 during apoptosis; which facilitates apoptotic chromatin condensation. GlcNAcylation at Ser-113 promotes monoubiquitination of Lys-121. It fluctuates in response to extracellular glucose, and associates with transcribed genes.

It localises to the nucleus. The protein resides in the chromosome. Functionally, core component of nucleosome. Nucleosomes wrap and compact DNA into chromatin, limiting DNA accessibility to the cellular machineries which require DNA as a template. Histones thereby play a central role in transcription regulation, DNA repair, DNA replication and chromosomal stability. DNA accessibility is regulated via a complex set of post-translational modifications of histones, also called histone code, and nucleosome remodeling. This chain is Histone H2B 7 (H2B-VII), found in Gallus gallus (Chicken).